The chain runs to 348 residues: MFLQNAWYAVAWCDEVTDGIVTRKVLGRELALFRDGEGQPRAILNRCPHRFAPLSLGKRIGDAIQCPYHGLHFGPDGRCVHNPHGDGVVPDVATPTFPARERHKLIWAWMGDPALATDDIAGGEYGYLDDVELDLLPRGHLHLDCDYRLVIDNLMDPAHVAVLHDSALASEALIRAVPRVWREEDVIRVESWAPDSKPSFLFGAWLGNHDDPVDHWVASRWQAAGLLSVEGGVVAVGGDREDGLRVRGAHMITPETETSAHYFWAVVRNFREDDAEQSEQIRATTAAIFTGEDKWMLEAIERSMDGEEFWSLRPAILGTDRAAVMVRRALESEIKAEGRPKVVAVSAG.

In terms of domain architecture, Rieske spans Trp-7–Ala-108. Residues Cys-47, His-49, Cys-66, and His-69 each contribute to the [2Fe-2S] cluster site. His-159 and His-164 together coordinate Fe cation. A substrate-binding site is contributed by His-250. Asp-293 is a Fe cation binding site.

The chloroacetanilide N-alkylformylase multicomponent enzyme system is composed of an oxygenase component (CndA) and an electron transfer component formed by a ferredoxin reductase (CndC1) and a ferredoxin (CndB1). In vitro, chloroacetanilide N-alkylformylase assays in which CndB1 is substituted for CndB2 demonstrate that the two enzymes possess nearly identical activities. It depends on [2Fe-2S] cluster as a cofactor.

It catalyses the reaction butachlor + 2 reduced [2Fe-2S]-[ferredoxin] + O2 + 2 H(+) = butyl formate + N-(2,6-diethylphenyl)-2-chloroacetamide + 2 oxidized [2Fe-2S]-[ferredoxin] + H2O. The enzyme catalyses alachlor + 2 reduced [2Fe-2S]-[ferredoxin] + O2 + 2 H(+) = methyl formate + N-(2,6-diethylphenyl)-2-chloroacetamide + 2 oxidized [2Fe-2S]-[ferredoxin] + H2O. The catalysed reaction is acetochlor + 2 reduced [2Fe-2S]-[ferredoxin] + O2 + 2 H(+) = N-(2-ethyl-6-methylphenyl)-2-chloroacetamide + ethyl formate + 2 oxidized [2Fe-2S]-[ferredoxin] + H2O. Its activity is regulated as follows. Activity enhanced by Fe(2+) and Mg(2+) ions. Divalent cations such as Ca(2+), Cr(2+), Co(2+), and Mn(2+) show moderate inhibition of the enzyme, whereas heavy metal ions such as Ag(+), Cu(2+), Pb(2+), Hg(2+), Ni(2+) and Zn(2+) severely inhibit the activity. Its function is as follows. Component of the chloroacetanilide N-alkylformylase multicomponent enzyme system involved in the degradation of chloroacetanilide herbicides (N-alkoxyalkyl-N-chloroacetyl-substituted aniline derivatives). In vitro, catalyzes the N-dealkylation of butachlor, alachlor and acetochlor to yield 2-chloro-N-(2,6-diethylphenyl)acetamide (CDEPA) (for alachlor and butachlor) and 2-chloro-N-(2-methyl-6-ethylphenyl)acetamide (CMEPA) (for acetochlor). The protein is Chloroacetanilide N-alkylformylase, oxygenase component of Rhizorhabdus wittichii (strain DC-6 / KACC 16600) (Sphingomonas wittichii).